We begin with the raw amino-acid sequence, 558 residues long: Vanin-like protein 1 (558 aa).

The N-terminal stretch at 1-22 (MSNTWWWLSVVLLILGLMPGMS) is a signal peptide. Residues 33–299 (YTAGVVEFKQ…RAIYVAQVPK (267 aa)) enclose the CN hydrolase domain. A glycan (N-linked (GlcNAc...) asparagine) is linked at N65. The active-site Proton acceptor is the E76. Residues N103, N120, and N128 are each glycosylated (N-linked (GlcNAc...) asparagine). The active-site Proton donor is the K171. N-linked (GlcNAc...) asparagine glycosylation is present at N180. Catalysis depends on C203, which acts as the Nucleophile. N-linked (GlcNAc...) asparagine glycosylation is found at N354 and N379. Residue S531 is the site of GPI-anchor amidated serine attachment. A propeptide spans 532–558 (GSPGLRILGGWLAMPLIILAIARTMSS) (removed in mature form).

The protein belongs to the carbon-nitrogen hydrolase superfamily. BTD/VNN family. As to expression, expressed in larvae and early pupae. Expressed in third instar larvae.

It localises to the cell membrane. This is Vanin-like protein 1 from Drosophila melanogaster (Fruit fly).